The chain runs to 437 residues: UDP-N-acetylmuramoylalanine--D-glutamate ligase (437 aa).

112-118 (GSNGKST) is an ATP binding site.

The protein belongs to the MurCDEF family.

The protein localises to the cytoplasm. The catalysed reaction is UDP-N-acetyl-alpha-D-muramoyl-L-alanine + D-glutamate + ATP = UDP-N-acetyl-alpha-D-muramoyl-L-alanyl-D-glutamate + ADP + phosphate + H(+). Its pathway is cell wall biogenesis; peptidoglycan biosynthesis. In terms of biological role, cell wall formation. Catalyzes the addition of glutamate to the nucleotide precursor UDP-N-acetylmuramoyl-L-alanine (UMA). The protein is UDP-N-acetylmuramoylalanine--D-glutamate ligase of Haemophilus influenzae (strain 86-028NP).